A 1011-amino-acid polypeptide reads, in one-letter code: MHSMISSVDVKSEVPVGLEPISPLDLRTDLRMMMPVVDPVVREKQLQQELLLIQQQQQIQKQLLIAEFQKQHENLTRQHQAQLQEHIKELLAIKQQQELLEKEQKLEQQRQEQEVERHRREQQLPPLRGKDRGRERAVASTEVKQKLQEFLLSKSATKDTPTNGKNHSVSRHPKLWYTAAHHTSLDQSSPPLSGTSPSYKYTLPGAQDAKDDFPLRKTASEPNLKVRSRLKQKVAERRSSPLLRRKDGNVVTSFKKRMFEVTESSVSSSSPGSGPSSPNNGPTGSVTENETSVLPPTPHAEQMVSQQRILIHEDSMNLLSLYTSPSLPNITLGLPAVPSQLNASNSLKEKQKCETQTLRQGVPLPGQYGGSIPASSSHPHVTLEGKPPNSSHQALLQHLLLKEQMRQQKLLVAGGVPLHPQSPLATKERISPGIRGTHKLPRHRPLNRTQSAPLPQSTLAQLVIQQQHQQFLEKQKQYQQQIHMNKLLSKSIEQLKQPGSHLEEAEEELQGDQAMQEDRAPSSGNSTRSDSSACVDDTLGQVGAVKVKEEPVDSDEDAQIQEMESGEQAAFMQQPFLEPTHTRALSVRQAPLAAVGMDGLEKHRLVSRTHSSPAASVLPHPAMDRPLQPGSATGIAYDPLMLKHQCVCGNSTTHPEHAGRIQSIWSRLQETGLLNKCERIQGRKASLEEIQLVHSEHHSLLYGTNPLDGQKLDPRILLGDDSQKFFSSLPCGGLGVDSDTIWNELHSSGAARMAVGCVIELASKVASGELKNGFAVVRPPGHHAEESTAMGFCFFNSVAITAKYLRDQLNISKILIVDLDVHHGNGTQQAFYADPSILYISLHRYDEGNFFPGSGAPNEVGTGLGEGYNINIAWTGGLDPPMGDVEYLEAFRTIVKPVAKEFDPDMVLVSAGFDALEGHTPPLGGYKVTAKCFGHLTKQLMTLADGRVVLALEGGHDLTAICDASEACVNALLGNELEPLAEDILHQSPNMNAVISLQKIIEIQSMSLKFS.

Phosphoserine is present on Ser-22. The interval 23–27 (PLDLR) is interaction with CTBP1. 3 disordered regions span residues 110–139 (RQEQ…RAVA), 183–249 (TSLD…KDGN), and 262–304 (TESS…EQMV). The segment at 136–154 (RAVASTEVKQKLQEFLLSK) is interaction with MEF2. Positions 175 to 343 (LWYTAAHHTS…LPAVPSQLNA (169 aa)) are interaction with MAPK10. Positions 185-199 (LDQSSPPLSGTSPSY) are enriched in polar residues. The segment covering 208–219 (DAKDDFPLRKTA) has biased composition (basic and acidic residues). Residues 218-261 (TASEPNLKVRSRLKQKVAERRSSPLLRRKDGNVVTSFKKRMFEV) form an interaction with ETV6 region. Phosphoserine is present on residues Ser-220 and Ser-240. The span at 233 to 248 (KVAERRSSPLLRRKDG) shows a compositional bias: basic and acidic residues. The span at 262–285 (TESSVSSSSPGSGPSSPNNGPTGS) shows a compositional bias: low complexity. A Phosphoserine modification is found at Ser-451. The disordered stretch occupies residues 494 to 536 (QLKQPGSHLEEAEEELQGDQAMQEDRAPSSGNSTRSDSSACVD). Positions 522-532 (SSGNSTRSDSS) are enriched in polar residues. A Phosphoserine modification is found at Ser-554. The segment at 631–978 (SATGIAYDPL…VNALLGNELE (348 aa)) is histone deacetylase. Cys-646, Cys-648, His-654, and Cys-731 together coordinate Zn(2+). The active site involves His-783.

It belongs to the histone deacetylase family. HD type 2 subfamily. Homodimer. Interacts with CTBP1. The phosphorylated form interacts with 14-3-3. Interacts with HDAC1 and HDAC3, and probably with HDAC4 and HDAC5. Interacts with MEF2, MAPK10, ETV6, NCOR1 and BCL6. Interacts with FOXP3 in the absence of T-cell stimulation. Phosphorylated on Ser-220 and Ser-450; which promotes 14-3-3-binding, impairs interaction with MEF2, and antagonizes antimyogenic activity. Phosphorylated on Ser-240; which impairs nuclear accumulation. Isoform 7 is phosphorylated on Tyr-1010. Phosphorylated by the PKC kinases PKN1 and PKN2, impairing nuclear import. Post-translationally, sumoylated. Broadly expressed, with highest levels in brain, heart, muscle and testis. Isoform 3 is present in human bladder carcinoma cells (at protein level).

Its subcellular location is the nucleus. The catalysed reaction is N(6)-acetyl-L-lysyl-[histone] + H2O = L-lysyl-[histone] + acetate. With respect to regulation, inhibited by Trichostatin A (TSA) and suberoylanilide hydroxamic acid. Its function is as follows. Responsible for the deacetylation of lysine residues on the N-terminal part of the core histones (H2A, H2B, H3 and H4). Histone deacetylation gives a tag for epigenetic repression and plays an important role in transcriptional regulation, cell cycle progression and developmental events. Represses MEF2-dependent transcription. Isoform 3 lacks active site residues and therefore is catalytically inactive. Represses MEF2-dependent transcription by recruiting HDAC1 and/or HDAC3. Seems to inhibit skeletal myogenesis and to be involved in heart development. Protects neurons from apoptosis, both by inhibiting JUN phosphorylation by MAPK10 and by repressing JUN transcription via HDAC1 recruitment to JUN promoter. The protein is Histone deacetylase 9 (HDAC9) of Homo sapiens (Human).